The chain runs to 575 residues: Carboxylesterase 5A (575 aa).

Residues 1–27 form the signal peptide; it reads MSGEWGHLGQTLIWAVWVLAAATEGPA. N82 is a glycosylation site (N-linked (GlcNAc...) asparagine). C94 and C121 form a disulfide bridge. The Acyl-ester intermediate role is filled by S226. C280 and C291 form a disulfide bridge. The N-linked (GlcNAc...) asparagine glycan is linked to N281. Catalysis depends on E345, which acts as the Charge relay system. N-linked (GlcNAc...) asparagine glycosylation is present at N363. The active-site Charge relay system is the H454. An N-linked (GlcNAc...) asparagine glycan is attached at N524.

It belongs to the type-B carboxylesterase/lipase family. In terms of processing, N-glycosylated.

The protein localises to the secreted. The catalysed reaction is a carboxylic ester + H2O = an alcohol + a carboxylate + H(+). Its function is as follows. Involved in the detoxification of xenobiotics and in the activation of ester and amide prodrugs. This is Carboxylesterase 5A (CES5A) from Canis lupus familiaris (Dog).